We begin with the raw amino-acid sequence, 238 residues long: Endonuclease V (238 aa).

2 residues coordinate Mg(2+): Asp-46 and Asp-116.

It belongs to the endonuclease V family. Mg(2+) is required as a cofactor.

Its subcellular location is the cytoplasm. It carries out the reaction Endonucleolytic cleavage at apurinic or apyrimidinic sites to products with a 5'-phosphate.. DNA repair enzyme involved in the repair of deaminated bases. Selectively cleaves double-stranded DNA at the second phosphodiester bond 3' to a deoxyinosine leaving behind the intact lesion on the nicked DNA. This chain is Endonuclease V, found in Bacillus subtilis (strain 168).